A 182-amino-acid polypeptide reads, in one-letter code: ATP synthase subunit delta (182 aa).

It belongs to the ATPase delta chain family. As to quaternary structure, F-type ATPases have 2 components, F(1) - the catalytic core - and F(0) - the membrane proton channel. F(1) has five subunits: alpha(3), beta(3), gamma(1), delta(1), epsilon(1). CF(0) has four main subunits: a(1), b(1), b'(1) and c(10-14). The alpha and beta chains form an alternating ring which encloses part of the gamma chain. F(1) is attached to F(0) by a central stalk formed by the gamma and epsilon chains, while a peripheral stalk is formed by the delta, b and b' chains.

The protein localises to the cellular thylakoid membrane. F(1)F(0) ATP synthase produces ATP from ADP in the presence of a proton or sodium gradient. F-type ATPases consist of two structural domains, F(1) containing the extramembraneous catalytic core and F(0) containing the membrane proton channel, linked together by a central stalk and a peripheral stalk. During catalysis, ATP synthesis in the catalytic domain of F(1) is coupled via a rotary mechanism of the central stalk subunits to proton translocation. Functionally, this protein is part of the stalk that links CF(0) to CF(1). It either transmits conformational changes from CF(0) to CF(1) or is implicated in proton conduction. This is ATP synthase subunit delta from Microcystis aeruginosa (strain NIES-843 / IAM M-2473).